The primary structure comprises 163 residues: UPF0523 protein B (163 aa).

Belongs to the UPF0523 family.

In Dictyostelium discoideum (Social amoeba), this protein is UPF0523 protein B.